The sequence spans 209 residues: MIAIIDYGMGNIRSVEQALKYIGAEHIVTSDKEEILRSDGVILPGVGAFPKAMEVLEERDLVCVLKEVCDIGKPLLGICLGMQLLFERSEELKGCSGLGLLPGEIRKLKVSYKIPHMGWNELRKEREFPLWNGLVDGSFVYYVHSYYADCPDEIVCGVSDYGMQVPGFVAKGNVFGAQFHPEKSGEIGMQILKNFQGVVEAWKSSRLSI.

A Glutamine amidotransferase type-1 domain is found at 1–205 (MIAIIDYGMG…QGVVEAWKSS (205 aa)). C79 serves as the catalytic Nucleophile. Active-site residues include H180 and E182.

In terms of assembly, heterodimer of HisH and HisF.

It localises to the cytoplasm. It carries out the reaction 5-[(5-phospho-1-deoxy-D-ribulos-1-ylimino)methylamino]-1-(5-phospho-beta-D-ribosyl)imidazole-4-carboxamide + L-glutamine = D-erythro-1-(imidazol-4-yl)glycerol 3-phosphate + 5-amino-1-(5-phospho-beta-D-ribosyl)imidazole-4-carboxamide + L-glutamate + H(+). The enzyme catalyses L-glutamine + H2O = L-glutamate + NH4(+). Its pathway is amino-acid biosynthesis; L-histidine biosynthesis; L-histidine from 5-phospho-alpha-D-ribose 1-diphosphate: step 5/9. Its function is as follows. IGPS catalyzes the conversion of PRFAR and glutamine to IGP, AICAR and glutamate. The HisH subunit catalyzes the hydrolysis of glutamine to glutamate and ammonia as part of the synthesis of IGP and AICAR. The resulting ammonia molecule is channeled to the active site of HisF. In Bacillus cereus (strain G9842), this protein is Imidazole glycerol phosphate synthase subunit HisH.